The chain runs to 227 residues: UPF0758 protein llmg_1515 (227 aa).

An MPN domain is found at 103–225 (QVLSSKEYGM…YYSFRERDSN (123 aa)). Zn(2+) contacts are provided by His-174, His-176, and Asp-187. The JAMM motif motif lies at 174-187 (HNHPSGNLQPSQAD).

This sequence belongs to the UPF0758 family.

This Lactococcus lactis subsp. cremoris (strain MG1363) protein is UPF0758 protein llmg_1515.